A 376-amino-acid polypeptide reads, in one-letter code: Chaperone protein DnaJ (376 aa).

The region spanning 5–70 (DYYEILGVSK…QKRAAYDQYG (66 aa)) is the J domain. Residues 131-209 (GVTKEIRIPT…CHGHGRVERS (79 aa)) form a CR-type zinc finger. Zn(2+) contacts are provided by Cys-144, Cys-147, Cys-161, Cys-164, Cys-183, Cys-186, Cys-197, and Cys-200. 4 CXXCXGXG motif repeats span residues 144-151 (CDVCHGSG), 161-168 (CPTCHGSG), 183-190 (CPHCQGRG), and 197-204 (CNKCHGHG).

Belongs to the DnaJ family. As to quaternary structure, homodimer. The cofactor is Zn(2+).

The protein localises to the cytoplasm. In terms of biological role, participates actively in the response to hyperosmotic and heat shock by preventing the aggregation of stress-denatured proteins and by disaggregating proteins, also in an autonomous, DnaK-independent fashion. Unfolded proteins bind initially to DnaJ; upon interaction with the DnaJ-bound protein, DnaK hydrolyzes its bound ATP, resulting in the formation of a stable complex. GrpE releases ADP from DnaK; ATP binding to DnaK triggers the release of the substrate protein, thus completing the reaction cycle. Several rounds of ATP-dependent interactions between DnaJ, DnaK and GrpE are required for fully efficient folding. Also involved, together with DnaK and GrpE, in the DNA replication of plasmids through activation of initiation proteins. This Escherichia coli (strain K12 / MC4100 / BW2952) protein is Chaperone protein DnaJ.